A 365-amino-acid chain; its full sequence is Chaperone protein DnaJ (365 aa).

The J domain maps to 5-71 (DFYEILGIAK…QKRQAYDQFG (67 aa)). The segment at 128-206 (GTTVKIRIPK…CHGKGVVHKQ (79 aa)) adopts a CR-type zinc-finger fold. The Zn(2+) site is built by cysteine 141, cysteine 144, cysteine 158, cysteine 161, cysteine 180, cysteine 183, cysteine 194, and cysteine 197. 4 CXXCXGXG motif repeats span residues 141–148 (CDTCSGTG), 158–165 (CLTCGGAG), 180–187 (CNACSGTG), and 194–201 (CNNCHGKG).

The protein belongs to the DnaJ family. In terms of assembly, homodimer. Zn(2+) is required as a cofactor.

It is found in the cytoplasm. Functionally, participates actively in the response to hyperosmotic and heat shock by preventing the aggregation of stress-denatured proteins and by disaggregating proteins, also in an autonomous, DnaK-independent fashion. Unfolded proteins bind initially to DnaJ; upon interaction with the DnaJ-bound protein, DnaK hydrolyzes its bound ATP, resulting in the formation of a stable complex. GrpE releases ADP from DnaK; ATP binding to DnaK triggers the release of the substrate protein, thus completing the reaction cycle. Several rounds of ATP-dependent interactions between DnaJ, DnaK and GrpE are required for fully efficient folding. Also involved, together with DnaK and GrpE, in the DNA replication of plasmids through activation of initiation proteins. The protein is Chaperone protein DnaJ of Vesicomyosocius okutanii subsp. Calyptogena okutanii (strain HA).